The following is a 265-amino-acid chain: 3-methyl-2-oxobutanoate hydroxymethyltransferase (265 aa).

Residues D45 and D84 each coordinate Mg(2+). 3-methyl-2-oxobutanoate is bound by residues D45–S46, D84, and K112. Residue E114 coordinates Mg(2+). Residue E182 is the Proton acceptor of the active site.

Belongs to the PanB family. In terms of assembly, homodecamer; pentamer of dimers. The cofactor is Mg(2+).

It localises to the cytoplasm. It carries out the reaction 3-methyl-2-oxobutanoate + (6R)-5,10-methylene-5,6,7,8-tetrahydrofolate + H2O = 2-dehydropantoate + (6S)-5,6,7,8-tetrahydrofolate. It participates in cofactor biosynthesis; (R)-pantothenate biosynthesis; (R)-pantoate from 3-methyl-2-oxobutanoate: step 1/2. In terms of biological role, catalyzes the reversible reaction in which hydroxymethyl group from 5,10-methylenetetrahydrofolate is transferred onto alpha-ketoisovalerate to form ketopantoate. This chain is 3-methyl-2-oxobutanoate hydroxymethyltransferase, found in Baumannia cicadellinicola subsp. Homalodisca coagulata.